Reading from the N-terminus, the 294-residue chain is N-acetylmuramic acid 6-phosphate etherase (294 aa).

In terms of domain architecture, SIS spans 54 to 217 (VIASFRKGGR…STTSMIGVGK (164 aa)). Glutamate 82 serves as the catalytic Proton donor. Glutamate 113 is an active-site residue.

This sequence belongs to the GCKR-like family. MurNAc-6-P etherase subfamily. As to quaternary structure, homodimer.

It carries out the reaction N-acetyl-D-muramate 6-phosphate + H2O = N-acetyl-D-glucosamine 6-phosphate + (R)-lactate. It participates in amino-sugar metabolism; N-acetylmuramate degradation. Its function is as follows. Specifically catalyzes the cleavage of the D-lactyl ether substituent of MurNAc 6-phosphate, producing GlcNAc 6-phosphate and D-lactate. The polypeptide is N-acetylmuramic acid 6-phosphate etherase (Exiguobacterium sp. (strain ATCC BAA-1283 / AT1b)).